Here is a 278-residue protein sequence, read N- to C-terminus: Large ribosomal subunit protein uL2 (278 aa).

Residues 223 to 278 (GVAMNPIDHPHGGGEGRTSGGRHPVTPWGFPTKGKKTRSNKRTDTFIVSSRHNRKK) form a disordered region.

This sequence belongs to the universal ribosomal protein uL2 family. Part of the 50S ribosomal subunit. Forms a bridge to the 30S subunit in the 70S ribosome.

One of the primary rRNA binding proteins. Required for association of the 30S and 50S subunits to form the 70S ribosome, for tRNA binding and peptide bond formation. It has been suggested to have peptidyltransferase activity; this is somewhat controversial. Makes several contacts with the 16S rRNA in the 70S ribosome. The chain is Large ribosomal subunit protein uL2 from Methylobacterium sp. (strain 4-46).